A 271-amino-acid polypeptide reads, in one-letter code: MSAPRLLISIIIMVSASSSSCMGGKQMTQNYSTIFAEGNISQPVLMDINAVLCCPPIALRNLIIITWEIILRGQPSCTKAYKKETNETKETNCTVERITWVSRPDQNSDLQIRPVDTTHDGYYRGIVVTPDGNFHRGYHLQVLVTPEVNLFQSRNITAVCKAVTGKPAAQISWIPEGSILATKQEYWGNGTVTVKSTCPWEGHKSTVTCHVSHLTGNKSLSVKLNSGLRTSGSPALSLLIILYVKLSLFVVILVTTGFVFFQRINHVRKVL.

Residues 1-23 (MSAPRLLISIIIMVSASSSSCMG) form the signal peptide. Residues 24–239 (GKQMTQNYST…TSGSPALSLL (216 aa)) are Extracellular-facing. N-linked (GlcNAc...) asparagine glycans are attached at residues N30, N39, N86, N92, N189, and N217. Residues 46–132 (MDINAVLCCP…YRGIVVTPDG (87 aa)) form the Ig-like V-type domain. Residues 133 to 221 (NFHRGYHLQV…SHLTGNKSLS (89 aa)) form the Ig-like C2-type domain. C160 and C209 are disulfide-bonded. The chain crosses the membrane as a helical span at residues 240 to 260 (IILYVKLSLFVVILVTTGFVF). Residues 261–271 (FQRINHVRKVL) lie on the Cytoplasmic side of the membrane.

This sequence belongs to the CD200R family.

It is found in the membrane. May be a receptor for the CD200/OX2 cell surface glycoprotein. The polypeptide is Cell surface glycoprotein CD200 receptor 2 (CD200R1L) (Homo sapiens (Human)).